A 213-amino-acid chain; its full sequence is U1 small nuclear ribonucleoprotein C (213 aa).

The Matrin-type zinc finger occupies 4–36; that stretch reads YYCDYCDTYLTHDSPSVRKQHNAGYKHKANVRS. The segment covering 143–166 has biased composition (pro residues); it reads APSMPMPPLNSLPRPPTMNVPPAV. The interval 143–213 is disordered; sequence APSMPMPPLN…INAQGPEANH (71 aa). The span at 167-180 shows a compositional bias: low complexity; that stretch reads PGSTSTPTSGGAPS.

The protein belongs to the U1 small nuclear ribonucleoprotein C family. U1 snRNP is composed of the 7 core Sm proteins B/B', D1, D2, D3, E, F and G that assemble in a heptameric protein ring on the Sm site of the small nuclear RNA to form the core snRNP, and at least 3 U1 snRNP-specific proteins U1-70K, U1-A and U1-C. U1-C interacts with U1 snRNA and the 5' splice-site region of the pre-mRNA.

The protein localises to the nucleus. In terms of biological role, component of the spliceosomal U1 snRNP, which is essential for recognition of the pre-mRNA 5' splice-site and the subsequent assembly of the spliceosome. U1-C is directly involved in initial 5' splice-site recognition for both constitutive and regulated alternative splicing. The interaction with the 5' splice-site seems to precede base-pairing between the pre-mRNA and the U1 snRNA. Stimulates commitment or early (E) complex formation by stabilizing the base pairing of the 5' end of the U1 snRNA and the 5' splice-site region. The protein is U1 small nuclear ribonucleoprotein C of Vitis vinifera (Grape).